The sequence spans 279 residues: Phosphate import ATP-binding protein PstB (279 aa).

One can recognise an ABC transporter domain in the interval 33 to 274 (LDINKLNLFY…PLKKKTEDYI (242 aa)). 65–72 (GPSGCGKS) is a binding site for ATP.

The protein belongs to the ABC transporter superfamily. Phosphate importer (TC 3.A.1.7) family. The complex is composed of two ATP-binding proteins (PstB), two transmembrane proteins (PstC and PstA) and a solute-binding protein (PstS).

The protein localises to the cell inner membrane. It carries out the reaction phosphate(out) + ATP + H2O = ADP + 2 phosphate(in) + H(+). In terms of biological role, part of the ABC transporter complex PstSACB involved in phosphate import. Responsible for energy coupling to the transport system. The polypeptide is Phosphate import ATP-binding protein PstB (Colwellia psychrerythraea (strain 34H / ATCC BAA-681) (Vibrio psychroerythus)).